Consider the following 282-residue polypeptide: Probable septum site-determining protein MinC (282 aa).

The tract at residues 108–127 (AAARSADEESANAAAAAPAA) is disordered. Positions 118–127 (ANAAAAAPAA) are enriched in low complexity.

Belongs to the MinC family. Interacts with MinD and FtsZ.

In terms of biological role, cell division inhibitor that blocks the formation of polar Z ring septums. Rapidly oscillates between the poles of the cell to destabilize FtsZ filaments that have formed before they mature into polar Z rings. Prevents FtsZ polymerization. The protein is Probable septum site-determining protein MinC of Paraburkholderia xenovorans (strain LB400).